Here is a 488-residue protein sequence, read N- to C-terminus: Bifunctional protein GlmU (488 aa).

The pyrophosphorylase stretch occupies residues 1-237; it reads MPRTRTPLAA…AEEASGVNDR (237 aa). UDP-N-acetyl-alpha-D-glucosamine-binding positions include 13-16, lysine 27, glutamine 82, 87-88, 110-112, glycine 149, glutamate 164, asparagine 179, and asparagine 235; these read LAAG, GT, and SGD. Aspartate 112 serves as a coordination point for Mg(2+). Residue asparagine 235 participates in Mg(2+) binding. Residues 238 to 258 are linker; it reads VELSRANRVMVGRLAEAFMRA. The interval 259-488 is N-acetyltransferase; it reads GVTIEDPARF…KGRPAARRAS (230 aa). Residues arginine 341 and lysine 359 each coordinate UDP-N-acetyl-alpha-D-glucosamine. The active-site Proton acceptor is histidine 371. The UDP-N-acetyl-alpha-D-glucosamine site is built by tyrosine 374 and asparagine 385. Acetyl-CoA is bound by residues alanine 388, 394–395, serine 413, alanine 431, and arginine 448; that span reads NY. The segment at 459 to 488 is disordered; it reads AQRQAEKQMKGTATGPASARKGRPAARRAS. Residues 478 to 488 show a composition bias toward basic residues; that stretch reads RKGRPAARRAS.

The protein in the N-terminal section; belongs to the N-acetylglucosamine-1-phosphate uridyltransferase family. It in the C-terminal section; belongs to the transferase hexapeptide repeat family. Homotrimer. Requires Mg(2+) as cofactor.

Its subcellular location is the cytoplasm. It carries out the reaction alpha-D-glucosamine 1-phosphate + acetyl-CoA = N-acetyl-alpha-D-glucosamine 1-phosphate + CoA + H(+). It catalyses the reaction N-acetyl-alpha-D-glucosamine 1-phosphate + UTP + H(+) = UDP-N-acetyl-alpha-D-glucosamine + diphosphate. The protein operates within nucleotide-sugar biosynthesis; UDP-N-acetyl-alpha-D-glucosamine biosynthesis; N-acetyl-alpha-D-glucosamine 1-phosphate from alpha-D-glucosamine 6-phosphate (route II): step 2/2. Its pathway is nucleotide-sugar biosynthesis; UDP-N-acetyl-alpha-D-glucosamine biosynthesis; UDP-N-acetyl-alpha-D-glucosamine from N-acetyl-alpha-D-glucosamine 1-phosphate: step 1/1. It functions in the pathway bacterial outer membrane biogenesis; LPS lipid A biosynthesis. Catalyzes the last two sequential reactions in the de novo biosynthetic pathway for UDP-N-acetylglucosamine (UDP-GlcNAc). The C-terminal domain catalyzes the transfer of acetyl group from acetyl coenzyme A to glucosamine-1-phosphate (GlcN-1-P) to produce N-acetylglucosamine-1-phosphate (GlcNAc-1-P), which is converted into UDP-GlcNAc by the transfer of uridine 5-monophosphate (from uridine 5-triphosphate), a reaction catalyzed by the N-terminal domain. The sequence is that of Bifunctional protein GlmU from Anaeromyxobacter dehalogenans (strain 2CP-1 / ATCC BAA-258).